The primary structure comprises 401 residues: Putative hetero-Diels-Alderase asR5 (401 aa).

Positions 1 to 21 (MRRSFLISAALGLSMSTPALA) are cleaved as a signal peptide. Residues Asn-71, Asn-77, Asn-240, and Asn-334 are each glycosylated (N-linked (GlcNAc...) asparagine).

Belongs to the eupF Diels-Alderase family.

Its pathway is secondary metabolite biosynthesis; terpenoid biosynthesis. Functionally, putative hetero-Diels-Alderase; part of the gene cluster that mediates the biosynthesis of xenovulene A, an unusual meroterpenoid that has potent inhibitory effects on the human gamma-aminobutyrate A (GABAA) benzodiazepine receptor. The first step of xenovulene A biosynthesis is the biosynthesis of 3-methylorcinaldehyde performed by the non-reducing polyketide synthase aspks1. The salicylate hydroxylase asL1 then catalyzes the oxidative dearomatization of 3-methylorcinaldehyde to yield a dearomatized hydroxycyclohexadione. The 2-oxoglutarate-dependent dioxygenase asL3 further catalyzes the oxidative ring expansion to provide the first tropolone metabolite. The cytochrome P450 monooxygenase asR2 allows the synthesis of tropolone hemiacetal. In parallel, a previously unrecognised class of terpene cyclase, asR6, produces alpha-humulene from farnesylpyrophosphate (FPP). The putative Diels-Alderase asR5 probably catalyzes the formation of the tropolone-humulene skeleton by linking humulene and the polyketide moiety. Oxidative-ring contractions catalyzed by asL4 and asL6 then processively remove carbon atoms from the polyketide to yield xenovulene A. This chain is Putative hetero-Diels-Alderase asR5, found in Sarocladium schorii (Acremonium strictum (strain IMI 501407)).